Reading from the N-terminus, the 624-residue chain is DNA-directed RNA polymerase III subunit rpc-3 (624 aa).

2 disordered regions span residues 229–260 (KRKL…EEDL) and 373–418 (LAPK…ARMS). The span at 385–403 (DDSDDDEEDGDYSDSDEEM) shows a compositional bias: acidic residues. Positions 551-572 (CYATMVHCLQVLEVRRQKDKDV) are leucine-zipper.

This sequence belongs to the RNA polymerase beta chain family. In terms of assembly, component of the RNA polymerase III (Pol III) complex consisting of 17 subunits.

It is found in the nucleus. In terms of biological role, DNA-dependent RNA polymerase catalyzes the transcription of DNA into RNA using the four ribonucleoside triphosphates as substrates. Specific core component of RNA polymerase III which synthesizes small RNAs, such as 5S rRNA and tRNAs. The protein is DNA-directed RNA polymerase III subunit rpc-3 (rpc-82) of Neurospora crassa (strain ATCC 24698 / 74-OR23-1A / CBS 708.71 / DSM 1257 / FGSC 987).